The sequence spans 105 residues: U-scoloptoxin(16)-Sm4a (105 aa).

The N-terminal stretch at 1–22 (MWALTVFVTILAAAIPITGVTG) is a signal peptide.

The protein belongs to the scoloptoxin-16 family. Contains 4 disulfide bonds. As to expression, expressed by the venom gland.

The protein localises to the secreted. This Scolopendra morsitans (Tanzanian blue ringleg centipede) protein is U-scoloptoxin(16)-Sm4a.